We begin with the raw amino-acid sequence, 279 residues long: Acetyl-coenzyme A carboxylase carboxyl transferase subunit beta (279 aa).

In terms of domain architecture, CoA carboxyltransferase N-terminal spans 23–279 (MWWKCDECGA…IVRLMTMLAP (257 aa)). Residues C27, C30, C46, and C49 each contribute to the Zn(2+) site. A C4-type zinc finger spans residues 27 to 49 (CDECGAMLHKKQLEDNFYTCSEC).

Belongs to the AccD/PCCB family. As to quaternary structure, acetyl-CoA carboxylase is a heterohexamer composed of biotin carboxyl carrier protein (AccB), biotin carboxylase (AccC) and two subunits each of ACCase subunit alpha (AccA) and ACCase subunit beta (AccD). Requires Zn(2+) as cofactor.

It is found in the cytoplasm. It carries out the reaction N(6)-carboxybiotinyl-L-lysyl-[protein] + acetyl-CoA = N(6)-biotinyl-L-lysyl-[protein] + malonyl-CoA. It functions in the pathway lipid metabolism; malonyl-CoA biosynthesis; malonyl-CoA from acetyl-CoA: step 1/1. In terms of biological role, component of the acetyl coenzyme A carboxylase (ACC) complex. Biotin carboxylase (BC) catalyzes the carboxylation of biotin on its carrier protein (BCCP) and then the CO(2) group is transferred by the transcarboxylase to acetyl-CoA to form malonyl-CoA. The chain is Acetyl-coenzyme A carboxylase carboxyl transferase subunit beta from Chlorobium phaeobacteroides (strain DSM 266 / SMG 266 / 2430).